Consider the following 147-residue polypeptide: Methylglyoxal synthase (147 aa).

The MGS-like domain occupies 4–147 (VSVPATKRIA…LLNFELLCES (144 aa)). Substrate contacts are provided by residues histidine 17, lysine 21, 43 to 46 (TGTT), and 63 to 64 (SG). Residue aspartate 69 is the Proton donor/acceptor of the active site. Residue histidine 96 participates in substrate binding.

The protein belongs to the methylglyoxal synthase family.

The enzyme catalyses dihydroxyacetone phosphate = methylglyoxal + phosphate. Catalyzes the formation of methylglyoxal from dihydroxyacetone phosphate. The sequence is that of Methylglyoxal synthase from Leptospira borgpetersenii serovar Hardjo-bovis (strain JB197).